The primary structure comprises 380 residues: Capsular polysaccharide biosynthesis glycosyltransferase CapM (380 aa).

Belongs to the glycosyltransferase group 1 family. Glycosyltransferase 4 subfamily.

Its pathway is capsule biogenesis; capsule polysaccharide biosynthesis. Functionally, required for the biosynthesis of type 1 capsular polysaccharide. The polypeptide is Capsular polysaccharide biosynthesis glycosyltransferase CapM (capM) (Staphylococcus aureus).